The primary structure comprises 358 residues: 3-dehydroquinate synthase (358 aa).

NAD(+)-binding positions include 72–77, 106–110, 130–131, lysine 143, and lysine 151; these read GGERVK, GALLD, and ST. Residues glutamate 184, histidine 245, and histidine 261 each coordinate Zn(2+).

The protein belongs to the sugar phosphate cyclases superfamily. Dehydroquinate synthase family. It depends on NAD(+) as a cofactor. The cofactor is Co(2+). Zn(2+) serves as cofactor.

It is found in the cytoplasm. The enzyme catalyses 7-phospho-2-dehydro-3-deoxy-D-arabino-heptonate = 3-dehydroquinate + phosphate. It functions in the pathway metabolic intermediate biosynthesis; chorismate biosynthesis; chorismate from D-erythrose 4-phosphate and phosphoenolpyruvate: step 2/7. Catalyzes the conversion of 3-deoxy-D-arabino-heptulosonate 7-phosphate (DAHP) to dehydroquinate (DHQ). This Aeropyrum pernix (strain ATCC 700893 / DSM 11879 / JCM 9820 / NBRC 100138 / K1) protein is 3-dehydroquinate synthase (aroB).